Here is a 158-residue protein sequence, read N- to C-terminus: UPF0260 protein RHE_CH01262 (158 aa).

Belongs to the UPF0260 family.

The sequence is that of UPF0260 protein RHE_CH01262 from Rhizobium etli (strain ATCC 51251 / DSM 11541 / JCM 21823 / NBRC 15573 / CFN 42).